The chain runs to 104 residues: L-rhamnose mutarotase (104 aa).

Tyrosine 18 serves as a coordination point for substrate. Histidine 22 acts as the Proton donor in catalysis. Residues tyrosine 41 and 76–77 (WW) each bind substrate.

It belongs to the rhamnose mutarotase family. Homodimer.

Its subcellular location is the cytoplasm. The enzyme catalyses alpha-L-rhamnose = beta-L-rhamnose. Its pathway is carbohydrate metabolism; L-rhamnose metabolism. Functionally, involved in the anomeric conversion of L-rhamnose. This chain is L-rhamnose mutarotase, found in Cronobacter sakazakii (strain ATCC BAA-894) (Enterobacter sakazakii).